Here is a 348-residue protein sequence, read N- to C-terminus: Rhodopsin (348 aa).

N-acetylmethionine is present on M1. The Extracellular portion of the chain corresponds to 1-36; it reads MNGTEGPNFYVPFSNKTGVVRSPFEYPQYYLAEPWQ. 2 N-linked (GlcNAc...) asparagine glycosylation sites follow: N2 and N15. A helical transmembrane segment spans residues 37–61; it reads FSMLAAYMFLLIVLGFPINFLTLYV. Residues 62 to 73 are Cytoplasmic-facing; it reads TVQHKKLRTPLN. A helical transmembrane segment spans residues 74–96; that stretch reads YILLNLAVADLFMVFGGFTTTLY. The Extracellular segment spans residues 97-110; sequence TSLHGYFVFGPTGC. A disulfide bond links C110 and C187. The chain crosses the membrane as a helical span at residues 111-133; that stretch reads NVEGFFATLGGEIALWSLVVLAI. The 'Ionic lock' involved in activated form stabilization motif lies at 134–136; that stretch reads ERY. The Cytoplasmic portion of the chain corresponds to 134–152; the sequence is ERYVVVCKPMSNFRFGENH. The helical transmembrane segment at 153–173 threads the bilayer; it reads AIMGVAFTWVMALACAAPPLA. Over 174–202 the chain is Extracellular; the sequence is GWSRYIPEGMQCSCGIDYYTLKPEVNNES. E201 lines the Zn(2+) pocket. Residues 203–224 traverse the membrane as a helical segment; sequence FVIYMFVVHFTIPMIVIFFCYG. Residues 225-252 are Cytoplasmic-facing; that stretch reads QLVFTVKEAAAQQQESATTQKAEKEVTR. Residues 253-274 traverse the membrane as a helical segment; it reads MVIIMVIAFLICWVPYASVAFY. At 275 to 286 the chain is on the extracellular side; that stretch reads IFTHQGSNFGPI. Position 279 (Q279) interacts with Zn(2+). Residues 287–308 form a helical membrane-spanning segment; the sequence is FMTLPAFFAKSASIYNPVIYIM. K296 carries the N6-(retinylidene)lysine modification. At 309–348 the chain is on the cytoplasmic side; the sequence is MNKQFRNCMLTTICCGKNPFAEEEGATTVSKTETSQVAPA. 2 S-palmitoyl cysteine lipidation sites follow: C322 and C323. Residues 330-348 are interaction with SAG; it reads EEEGATTVSKTETSQVAPA. Phosphothreonine occurs at positions 335 and 336. Residue S338 is modified to Phosphoserine. A phosphothreonine mark is found at T340 and T342. S343 is modified (phosphoserine).

This sequence belongs to the G-protein coupled receptor 1 family. Opsin subfamily. In terms of assembly, homodimer. May form a complex composed of RHO, GRK1 and RCVRN in a Ca(2+)-dependent manner; RCVRN prevents the interaction between GRK1 and RHO. Interacts with GRK1. Interacts (phosphorylated form) with SAG. Interacts with GNAT1. Interacts with GNAT3. SAG and G-proteins compete for a common binding site. Interacts with PRCD; the interaction promotes PRCD stability. Forms a complex with ASAP1 and ARF4. Forms a complex with ASAP1, RAB11A, Rabin8/RAB3IP, ARF4 and RAB11FIP3; the complex regulates Golgi-to-cilia rhodopsin/RHO transport in photoreceptors. Post-translationally, phosphorylated on some or all of the serine and threonine residues present in the C-terminal region. In terms of processing, contains one covalently linked retinal chromophore. Upon light absorption, the covalently bound 11-cis-retinal is converted to all-trans-retinal. After hydrolysis of the Schiff base and release of the covalently bound all-trans-retinal, active rhodopsin is regenerated by binding of a fresh molecule of 11-cis-retinal.

The protein resides in the membrane. Its subcellular location is the cell projection. The protein localises to the cilium. It localises to the photoreceptor outer segment. In terms of biological role, photoreceptor required for image-forming vision at low light intensity. Required for photoreceptor cell viability after birth. Light-induced isomerization of 11-cis to all-trans retinal triggers a conformational change that activates signaling via G-proteins. Subsequent receptor phosphorylation mediates displacement of the bound G-protein alpha subunit by the arrestin SAG and terminates signaling. The chain is Rhodopsin (RHO) from Trichechus manatus (Caribbean manatee).